Here is a 292-residue protein sequence, read N- to C-terminus: Feruloyl esterase B (292 aa).

An N-terminal signal peptide occupies residues 1–18; it reads MLPRTLLGLALTAATGLC. Residues Asn88, Asn117, Asn179, and Asn245 are each glycosylated (N-linked (GlcNAc...) asparagine).

It belongs to the carbohydrate esterase 1 (CE1) family. Feruloyl esterase type B subfamily.

Its subcellular location is the secreted. The catalysed reaction is feruloyl-polysaccharide + H2O = ferulate + polysaccharide.. Functionally, involved in degradation of plant cell walls. Hydrolyzes of the feruloyl-arabinose ester bond in arabinoxylans as well as the feruloyl-galactose and feruloyl-arabinose ester bonds in pectin. This Neurospora crassa (strain ATCC 24698 / 74-OR23-1A / CBS 708.71 / DSM 1257 / FGSC 987) protein is Feruloyl esterase B (fae-1).